The chain runs to 552 residues: Undecaprenyl phosphate-alpha-4-amino-4-deoxy-L-arabinose arabinosyl transferase (552 aa).

11 consecutive transmembrane segments (helical) span residues 4 to 24, 81 to 101, 113 to 133, 176 to 196, 207 to 227, 255 to 275, 289 to 309, 313 to 333, 351 to 371, 384 to 404, and 411 to 431; these read IAGWFTLAVLFVLYYIVPLPG, FAVRFGAVLATVLSALLVFWL, VVAVLIYLTSFLVYGVGSYAV, FMTKGFLALAIPVIAVLPWVI, FGPLAVLSAILISLPWVLAIA, APFWYYLPILLIGLLPWLGLL, QGGDFYLLGWAVMPFLLFSIA, LPTYILPCFAPLAILMAGYVQ, LLVGLGGMAAILLVLAPWGIT, VILGTIAFGVWALFGALSLYH, and WSAACLLGVALLIGTALPQQV.

This sequence belongs to the glycosyltransferase 83 family.

The protein resides in the cell inner membrane. The catalysed reaction is 4-amino-4-deoxy-alpha-L-arabinopyranosyl di-trans,octa-cis-undecaprenyl phosphate + lipid IVA = lipid IIA + di-trans,octa-cis-undecaprenyl phosphate.. It participates in lipopolysaccharide metabolism; 4-amino-4-deoxy-beta-L-arabinose-lipid A biosynthesis. In terms of biological role, catalyzes the transfer of the L-Ara4N moiety of the glycolipid undecaprenyl phosphate-alpha-L-Ara4N to lipid A. The modified arabinose is attached to lipid A and is required for resistance to polymyxin and cationic antimicrobial peptides. This Edwardsiella ictaluri (strain 93-146) protein is Undecaprenyl phosphate-alpha-4-amino-4-deoxy-L-arabinose arabinosyl transferase.